The following is a 147-amino-acid chain: Probable cytidine deaminase (147 aa).

Positions E4–E130 constitute a CMP/dCMP-type deaminase domain. N45–Y51 is a binding site for substrate. C56 contributes to the Zn(2+) binding site. E58 acts as the Proton donor in catalysis. Positions 90 and 93 each coordinate Zn(2+).

Belongs to the cytidine and deoxycytidylate deaminase family. Zn(2+) is required as a cofactor.

The enzyme catalyses cytidine + H2O + H(+) = uridine + NH4(+). It catalyses the reaction 2'-deoxycytidine + H2O + H(+) = 2'-deoxyuridine + NH4(+). Functionally, this enzyme scavenges exogenous and endogenous cytidine and 2'-deoxycytidine for UMP synthesis. This is Probable cytidine deaminase (cda) from Dictyostelium discoideum (Social amoeba).